The sequence spans 791 residues: Primase D5 (791 aa).

Residue Asp174 is part of the active site. Residues 346-471 (SDRGEYLVWL…ELMSILDDIQ (126 aa)) are primase. The SF3 helicase domain occupies 479-641 (ENRELYEQIL…FTNTKKKVHN (163 aa)). 505–512 (GETATGKS) contacts ATP.

It belongs to the poxviridae D5 family. In terms of assembly, interacts with A20.

Primase which may have roles in initiation of DNA replication or lagging-strand synthesis. The polypeptide is Primase D5 (Fowlpox virus (strain NVSL) (FPV)).